Here is a 335-residue protein sequence, read N- to C-terminus: Aspartate--ammonia ligase (335 aa).

The protein belongs to the class-II aminoacyl-tRNA synthetase family. AsnA subfamily.

The protein resides in the cytoplasm. It catalyses the reaction L-aspartate + NH4(+) + ATP = L-asparagine + AMP + diphosphate + H(+). It participates in amino-acid biosynthesis; L-asparagine biosynthesis; L-asparagine from L-aspartate (ammonia route): step 1/1. This Pediococcus pentosaceus (strain ATCC 25745 / CCUG 21536 / LMG 10740 / 183-1w) protein is Aspartate--ammonia ligase.